A 505-amino-acid chain; its full sequence is Maturase K (505 aa).

Belongs to the intron maturase 2 family. MatK subfamily.

Its subcellular location is the plastid. It localises to the chloroplast. Its function is as follows. Usually encoded in the trnK tRNA gene intron. Probably assists in splicing its own and other chloroplast group II introns. This Morus indica (Mulberry) protein is Maturase K.